A 308-amino-acid polypeptide reads, in one-letter code: Ankyrin repeat and SOCS box protein 12 (308 aa).

ANK repeat units follow at residues 63–92 (IPGT…DVDS), 96–125 (KAQT…CPSG), 129–158 (NNCS…EANV), 171–200 (SCSG…DPDY), and 213–243 (QPRT…NIYL). Positions 268–308 (PRSLLSQTRLVIRRSLCRANQSQATDQLDIPPVLISYLKHQ) constitute an SOCS box domain.

This sequence belongs to the ankyrin SOCS box (ASB) family. In terms of assembly, interacts with CUL5 and RNF7.

The protein operates within protein modification; protein ubiquitination. Functionally, probable substrate-recognition component of a SCF-like ECS (Elongin-Cullin-SOCS-box protein) E3 ubiquitin-protein ligase complex which mediates the ubiquitination and subsequent proteasomal degradation of target proteins. This Mus musculus (Mouse) protein is Ankyrin repeat and SOCS box protein 12 (Asb12).